Consider the following 351-residue polypeptide: D-alanine--D-alanine ligase (351 aa).

The ATP-grasp domain maps to 135–344; sequence KMAFAQAGLP…FAELVDQLIQ (210 aa). An ATP-binding site is contributed by 171-226; sequence EQRLGYPCFVKPANLGSSVGIAKVRSRSELEKALDSAASYDRRIVIETGVKAREVE. D297, E311, and N313 together coordinate Mg(2+).

It belongs to the D-alanine--D-alanine ligase family. The cofactor is Mg(2+). Requires Mn(2+) as cofactor.

It is found in the cytoplasm. It carries out the reaction 2 D-alanine + ATP = D-alanyl-D-alanine + ADP + phosphate + H(+). Its pathway is cell wall biogenesis; peptidoglycan biosynthesis. Functionally, cell wall formation. This is D-alanine--D-alanine ligase from Rippkaea orientalis (strain PCC 8801 / RF-1) (Cyanothece sp. (strain PCC 8801)).